The following is a 660-amino-acid chain: Anoctamin-10 (660 aa).

The Cytoplasmic segment spans residues 1–207; it reads MKVTLSALDT…DSIRGYFGET (207 aa). A helical membrane pass occupies residues 208–228; it reads IALYFGFLEYFTFALIPMAVI. At 229-240 the chain is on the extracellular side; it reads GLPYYLFVWEDY. A helical membrane pass occupies residues 241–261; it reads DKYVIFASFNLIWSTVILELW. Topologically, residues 262-316 are cytoplasmic; sequence KRGCANMTYRWGTLLMKRKFEEPRPGFHGVLGINSITGKEEPLYPSYKRQLRIYL. The helical transmembrane segment at 317–337 threads the bilayer; that stretch reads VSLPFVCLCLYFSLYVMMIYF. Residues 338 to 352 are Extracellular-facing; the sequence is DMEVWALGLHENSGS. A helical transmembrane segment spans residues 353 to 373; that stretch reads EWTSVLLYVPSIIYAIVIEIM. Topologically, residues 374–400 are cytoplasmic; the sequence is NRLYRYAAEFLTSWENHRLESAYQNHL. A helical membrane pass occupies residues 401–421; the sequence is ILKVLVFNFLNCFASLFYIAF. Residues 422–500 are Extracellular-facing; it reads VLKDMKLLRQ…YLGTFDDYLE (79 aa). The chain crosses the membrane as a helical span at residues 501–521; the sequence is LFLQFGYVSLFSCVYPLAAAF. Topologically, residues 522–553 are cytoplasmic; sequence AVLNNFTEVNSDALKMCRVFKRPFSEPSANIG. A helical membrane pass occupies residues 554-574; that stretch reads VWQLAFETMSVISVVTNCALI. The Extracellular portion of the chain corresponds to 575 to 590; sequence GMSPQVNAVFPESKAD. A helical membrane pass occupies residues 591–611; sequence LILIVVAVEHALLALKFILAF. The Cytoplasmic portion of the chain corresponds to 612–660; sequence AIPDKPRHIQMKLARLEFESLEALKQQQMKLVTENLKEEPMESGKEKAT.

It belongs to the anoctamin family. In terms of tissue distribution, highly expressed in the brain. Intermediate levels in the retina and heart and low levels in the placenta, liver, lung, duodenum, kidney, testis and spleen. In brain areas, highest expression in the frontal and occipital cortices and in the cerebellum. Lower expression in the fetal brain than in the adult brain.

The protein localises to the cell membrane. Does not exhibit calcium-activated chloride channel (CaCC) activity. Can inhibit the activity of ANO1. This chain is Anoctamin-10 (ANO10), found in Homo sapiens (Human).